The following is a 145-amino-acid chain: Shadow of prion protein (145 aa).

The N-terminal stretch at 1-24 is a signal peptide; sequence MNWAAAVCWALLLAATFLCDGSAA. N105 is a glycosylation site (N-linked (GlcNAc...) asparagine). S119 is lipidated: GPI-anchor amidated serine. Positions 120-145 are cleaved as a propeptide — removed in mature form; the sequence is GAGPTGHRHLCPLLGGALGALRLLRP.

It belongs to the SPRN family. Post-translationally, N-glycosylated. As to expression, mainly expressed in brain.

It localises to the cell membrane. In terms of biological role, prion-like protein that has PrP(C)-like neuroprotective activity. May act as a modulator for the biological actions of normal and abnormal PrP. This chain is Shadow of prion protein (SPRN), found in Ovis aries (Sheep).